The chain runs to 384 residues: Dual-specificity RNA methyltransferase RlmN (384 aa).

The active-site Proton acceptor is the Glu-93. Positions Glu-99–Asp-339 constitute a Radical SAM core domain. Residues Cys-106 and Cys-344 are joined by a disulfide bond. Positions 113, 117, and 120 each coordinate [4Fe-4S] cluster. Residues Gly-170–Glu-171, Ser-202, Ser-224–His-226, and Asn-301 each bind S-adenosyl-L-methionine. Cys-344 (S-methylcysteine intermediate) is an active-site residue.

Belongs to the radical SAM superfamily. RlmN family. [4Fe-4S] cluster serves as cofactor.

It localises to the cytoplasm. The catalysed reaction is adenosine(2503) in 23S rRNA + 2 reduced [2Fe-2S]-[ferredoxin] + 2 S-adenosyl-L-methionine = 2-methyladenosine(2503) in 23S rRNA + 5'-deoxyadenosine + L-methionine + 2 oxidized [2Fe-2S]-[ferredoxin] + S-adenosyl-L-homocysteine. It catalyses the reaction adenosine(37) in tRNA + 2 reduced [2Fe-2S]-[ferredoxin] + 2 S-adenosyl-L-methionine = 2-methyladenosine(37) in tRNA + 5'-deoxyadenosine + L-methionine + 2 oxidized [2Fe-2S]-[ferredoxin] + S-adenosyl-L-homocysteine. In terms of biological role, specifically methylates position 2 of adenine 2503 in 23S rRNA and position 2 of adenine 37 in tRNAs. m2A2503 modification seems to play a crucial role in the proofreading step occurring at the peptidyl transferase center and thus would serve to optimize ribosomal fidelity. The sequence is that of Dual-specificity RNA methyltransferase RlmN from Cupriavidus metallidurans (strain ATCC 43123 / DSM 2839 / NBRC 102507 / CH34) (Ralstonia metallidurans).